Consider the following 142-residue polypeptide: Calmodulin-alpha (142 aa).

Position 2 is an N-acetylalanine (Ala-2). EF-hand domains lie at 8–43 (EQIAEFKEAFSLFDKDGDGTITTKELGTVMRSLGQN), 44–79 (PTEAELQDMINEVDADGNGTIDFPEFLTMMARKMKD), 81–116 (DSEEEIREAFRVFDKDGNGYISAAELRHVMTNLGEK), and 117–142 (LTDEEVDEMIREADIDGDGQVNYEEF). Ca(2+) contacts are provided by Asp-21, Asp-23, Asp-25, Thr-27, Glu-32, Asp-57, Asp-59, Asn-61, Thr-63, Glu-68, Asp-94, Asp-96, Asn-98, Tyr-100, and Glu-105. Lys-116 is modified (N6,N6,N6-trimethyllysine). Asp-130, Asp-132, Asp-134, Gln-136, and Glu-141 together coordinate Ca(2+).

The protein belongs to the calmodulin family.

Calmodulin mediates the control of a large number of enzymes, ion channels and other proteins by Ca(2+). Among the enzymes to be stimulated by the calmodulin-Ca(2+) complex are a number of protein kinases and phosphatases. This Arbacia punctulata (Punctuate sea urchin) protein is Calmodulin-alpha.